Consider the following 562-residue polypeptide: Phosphomethylpyrimidine synthase (562 aa).

Residues Asn179, Met208, Tyr237, His273, 293 to 295, 334 to 337, and Glu373 contribute to the substrate site; these read SRG and DGLR. Residue His377 coordinates Zn(2+). Substrate is bound at residue Tyr400. His441 is a Zn(2+) binding site. The [4Fe-4S] cluster site is built by Cys521, Cys524, and Cys529.

This sequence belongs to the ThiC family. The cofactor is [4Fe-4S] cluster.

The catalysed reaction is 5-amino-1-(5-phospho-beta-D-ribosyl)imidazole + S-adenosyl-L-methionine = 4-amino-2-methyl-5-(phosphooxymethyl)pyrimidine + CO + 5'-deoxyadenosine + formate + L-methionine + 3 H(+). Its pathway is cofactor biosynthesis; thiamine diphosphate biosynthesis. Catalyzes the synthesis of the hydroxymethylpyrimidine phosphate (HMP-P) moiety of thiamine from aminoimidazole ribotide (AIR) in a radical S-adenosyl-L-methionine (SAM)-dependent reaction. This Geobacillus kaustophilus (strain HTA426) protein is Phosphomethylpyrimidine synthase.